The following is a 990-amino-acid chain: Bifunctional glutamine synthetase adenylyltransferase/adenylyl-removing enzyme (990 aa).

Residues 1-474 (MPTDNENSMT…HFNELVEESQ (474 aa)) are adenylyl removase. Residues 484 to 990 (FIACQDAWRL…WDTLFGTCSE (507 aa)) are adenylyl transferase.

The protein belongs to the GlnE family. Requires Mg(2+) as cofactor.

It carries out the reaction [glutamine synthetase]-O(4)-(5'-adenylyl)-L-tyrosine + phosphate = [glutamine synthetase]-L-tyrosine + ADP. The catalysed reaction is [glutamine synthetase]-L-tyrosine + ATP = [glutamine synthetase]-O(4)-(5'-adenylyl)-L-tyrosine + diphosphate. Involved in the regulation of glutamine synthetase GlnA, a key enzyme in the process to assimilate ammonia. When cellular nitrogen levels are high, the C-terminal adenylyl transferase (AT) inactivates GlnA by covalent transfer of an adenylyl group from ATP to specific tyrosine residue of GlnA, thus reducing its activity. Conversely, when nitrogen levels are low, the N-terminal adenylyl removase (AR) activates GlnA by removing the adenylyl group by phosphorolysis, increasing its activity. The regulatory region of GlnE binds the signal transduction protein PII (GlnB) which indicates the nitrogen status of the cell. The sequence is that of Bifunctional glutamine synthetase adenylyltransferase/adenylyl-removing enzyme from Alteromonas mediterranea (strain DSM 17117 / CIP 110805 / LMG 28347 / Deep ecotype).